Reading from the N-terminus, the 294-residue chain is Nucleotide-binding protein Adeh_0147 (294 aa).

17 to 24 (GVSGSGKS) is a binding site for ATP. 68 to 71 (DARE) lines the GTP pocket.

The protein belongs to the RapZ-like family.

Functionally, displays ATPase and GTPase activities. This is Nucleotide-binding protein Adeh_0147 from Anaeromyxobacter dehalogenans (strain 2CP-C).